Here is a 208-residue protein sequence, read N- to C-terminus: Uracil phosphoribosyltransferase (208 aa).

5-phospho-alpha-D-ribose 1-diphosphate is bound by residues arginine 78, arginine 103, and 130–138 (DPMLATGGS). Uracil-binding positions include isoleucine 193 and 198-200 (GDA). Aspartate 199 contributes to the 5-phospho-alpha-D-ribose 1-diphosphate binding site.

Belongs to the UPRTase family. It depends on Mg(2+) as a cofactor.

The enzyme catalyses UMP + diphosphate = 5-phospho-alpha-D-ribose 1-diphosphate + uracil. The protein operates within pyrimidine metabolism; UMP biosynthesis via salvage pathway; UMP from uracil: step 1/1. Its activity is regulated as follows. Allosterically activated by GTP. Catalyzes the conversion of uracil and 5-phospho-alpha-D-ribose 1-diphosphate (PRPP) to UMP and diphosphate. This is Uracil phosphoribosyltransferase from Trichlorobacter lovleyi (strain ATCC BAA-1151 / DSM 17278 / SZ) (Geobacter lovleyi).